The following is a 278-amino-acid chain: Serine protease 57 (278 aa).

Residues 1–31 (MVPGTGGGRDCLTLVVATALTQLLWLPGCCG) form the signal peptide. The region spanning 34 to 263 (IVGGHEVKPH…FVSWIWDVVR (230 aa)) is the Peptidase S1 domain. Cys59 and Cys75 are joined by a disulfide. Residues His74 and Asp122 each act as charge relay system in the active site. N-linked (GlcNAc...) asparagine glycosylation occurs at Asn129. Cystine bridges form between Cys157–Cys224, Cys188–Cys202, and Cys214–Cys239. Residue Ser218 is the Charge relay system of the active site.

This sequence belongs to the peptidase S1 family. In terms of processing, after cleavage of the signal peptide, the N-terminus is probably further processed by CTSC. Processing by CTSC is probably required for accumulation in cytoplasmic granules; in the absence of CTSC the protein does not accumulate. N-glycosylated.

It localises to the cytoplasmic granule lumen. The protein resides in the secreted. In terms of biological role, serine protease that cleaves preferentially after Arg residues. Can also cleave after citrulline (deimidated arginine) and methylarginine residues. This Rattus norvegicus (Rat) protein is Serine protease 57 (Prss57).